The primary structure comprises 359 residues: Protein RecA (359 aa).

Residue 64–71 (GHESSGKT) participates in ATP binding. The interval 328–359 (NKYPNKDSNDSPKEGSKIKTKVNPAVTQDELI) is disordered. The span at 331 to 344 (PNKDSNDSPKEGSK) shows a compositional bias: basic and acidic residues.

It belongs to the RecA family.

It localises to the cytoplasm. Functionally, can catalyze the hydrolysis of ATP in the presence of single-stranded DNA, the ATP-dependent uptake of single-stranded DNA by duplex DNA, and the ATP-dependent hybridization of homologous single-stranded DNAs. It interacts with LexA causing its activation and leading to its autocatalytic cleavage. This chain is Protein RecA, found in Francisella tularensis subsp. novicida (strain U112).